The following is a 362-amino-acid chain: tRNA-specific 2-thiouridylase MnmA (362 aa).

ATP-binding positions include 13–20 (GLSGGVDS) and M39. The tract at residues 99–101 (NPD) is interaction with target base in tRNA. The Nucleophile role is filled by C104. C104 and C200 are oxidised to a cystine. An ATP-binding site is contributed by G128. The tract at residues 150-152 (KDQ) is interaction with tRNA. C200 acts as the Cysteine persulfide intermediate in catalysis. Residues 310–311 (RY) form an interaction with tRNA region.

This sequence belongs to the MnmA/TRMU family.

The protein localises to the cytoplasm. The catalysed reaction is S-sulfanyl-L-cysteinyl-[protein] + uridine(34) in tRNA + AH2 + ATP = 2-thiouridine(34) in tRNA + L-cysteinyl-[protein] + A + AMP + diphosphate + H(+). In terms of biological role, catalyzes the 2-thiolation of uridine at the wobble position (U34) of tRNA, leading to the formation of s(2)U34. This Vesicomyosocius okutanii subsp. Calyptogena okutanii (strain HA) protein is tRNA-specific 2-thiouridylase MnmA.